Consider the following 302-residue polypeptide: RELT-like protein 2 (302 aa).

Residues 15 to 35 (LYMLFLLVLVFFLMGLVGFMI) traverse the membrane as a helical segment. Disordered stretches follow at residues 47-68 (RTSR…DDVN), 135-164 (CSRS…TTVF), 177-212 (RYGL…GQPR), and 247-302 (VPCT…AGGM). A Phosphoserine modification is found at Ser-52. Basic and acidic residues-rich tracts occupy residues 148–158 (RSKEGKGRPRP) and 177–188 (RYGLHEHRDGSP). The segment covering 277–294 (QEANGQPTKLDTSGQQDS) has biased composition (polar residues).

The protein belongs to the RELT family. In terms of assembly, interacts with RELT, RELL1, OXSR1, PLSCR1 and TRAF2.

The protein localises to the cell membrane. Its function is as follows. Induces activation of MAPK14/p38 cascade, when overexpressed. Induces apoptosis, when overexpressed. The chain is RELT-like protein 2 (Rell2) from Rattus norvegicus (Rat).